Consider the following 363-residue polypeptide: MEESIKLLVGCYEQVLFGYRVHREGEQWLSSADFTHHAHTASVSVLAVNNRFVATGSRDETIQIYDMKKKVEHGALLHHNGTITCLEFYGNTHLLSGAEDGLICVWNTKKWECQQTFKAHKGQVLSLSIHPSGKLALSVGTDKTLRTWNLVEGRSAFIKNIKKNAHIVHWSPSGEKYVVVIHDTVDVYQLETAAVVGTINNPKRISSAQFITDALIAVAGDEEVIRLYDTASQKCVCEFKAHENRVKNLHVIELQGTHVVVSSSSDGYIKMWRIDMEKVQTSPSLLCEVSTSARLTCLSAWLPSGVDHKEKSNTAVTASAVKDCDRPKKKKAQNETTDKEASETQVVHKKRKPETKQKKKKPS.

5 WD repeats span residues 38–75 (AHTA…EHGA), 78–116 (HHNG…CQQT), 119–158 (AHKG…SAFI), 200–238 (NNPK…CVCE), and 241–282 (AHEN…VQTS). A disordered region spans residues 309–363 (KEKSNTAVTASAVKDCDRPKKKKAQNETTDKEASETQVVHKKRKPETKQKKKKPS). Basic and acidic residues predominate over residues 322–342 (KDCDRPKKKKAQNETTDKEAS). Residues 347–363 (VHKKRKPETKQKKKKPS) show a composition bias toward basic residues.

The protein resides in the nucleus. It localises to the nucleolus. Functionally, negatively regulates the PAK1 kinase. PAK1 is a member of the PAK kinase family, which has been shown to play a positive role in the regulation of signaling pathways involving MAPK8 and RELA. PAK1 exists as an inactive homodimer, which is activated by binding of small GTPases such as CDC42 to an N-terminal regulatory domain. PAK1IP1 also binds to the N-terminus of PAK1, and inhibits the specific activation of PAK1 by CDC42. May be involved in ribosomal large subunit assembly. The sequence is that of p21-activated protein kinase-interacting protein 1-like (pak1ip1) from Xenopus laevis (African clawed frog).